Consider the following 75-residue polypeptide: RNA-binding protein Hfq (75 aa).

Residues 9-69 (DQFLNQLRKE…ISTFAPERNI (61 aa)) enclose the Sm domain.

This sequence belongs to the Hfq family. Homohexamer.

RNA chaperone that binds small regulatory RNA (sRNAs) and mRNAs to facilitate mRNA translational regulation in response to envelope stress, environmental stress and changes in metabolite concentrations. Also binds with high specificity to tRNAs. The protein is RNA-binding protein Hfq of Geobacillus kaustophilus (strain HTA426).